The following is a 461-amino-acid chain: Tumor necrosis factor receptor superfamily member 1A (461 aa).

The first 29 residues, Met-1–Gly-29, serve as a signal peptide directing secretion. At Leu-30 to Ala-211 the chain is on the extracellular side. 4 TNFR-Cys repeats span residues Leu-43 to Glu-82, Val-83 to Cys-125, Gly-126 to Cys-166, and Asn-167 to Leu-196. 12 disulfide bridges follow: Cys-44/Cys-58, Cys-59/Cys-72, Cys-62/Cys-81, Cys-84/Cys-99, Cys-102/Cys-117, Cys-105/Cys-125, Cys-127/Cys-143, Cys-146/Cys-158, Cys-149/Cys-166, Cys-168/Cys-179, Cys-182/Cys-195, and Cys-185/Cys-191. Asn-54 is a glycosylation site (N-linked (GlcNAc...) asparagine). N-linked (GlcNAc...) asparagine glycosylation occurs at Asn-151. An N-linked (GlcNAc...) asparagine glycan is attached at Asn-201. Residues Val-212–Cys-234 traverse the membrane as a helical segment. At Arg-235 to Arg-461 the chain is on the cytoplasmic side. The segment at Val-344 to Gln-354 is N-SMase activation domain (NSD). The region spanning Pro-363–Leu-448 is the Death domain.

As to quaternary structure, binding of TNF to the extracellular domain leads to homotrimerization. The aggregated death domains provide a novel molecular interface that interacts specifically with the death domain of TRADD. Various TRADD-interacting proteins such as TRAFS, RIPK1 and possibly FADD, are recruited to the complex by their association with TRADD. This complex activates at least two distinct signaling cascades, apoptosis and NF-kappa-B signaling. Interacts with BAG4, BABAM2, FEM1B, GRB2, SQSTM1 and TRPC4AP. Interacts with DAB2IP. Interacts directly with NOL3 (via CARD domain); inhibits TNF-signaling pathway. Interacts with SH3RF2, TRADD and RIPK1. SH3RF2 facilitates the recruitment of RIPK1 and TRADD to TNFRSF1A in a TNF-alpha-dependent process. Interacts with PGLYRP1; this interaction is important for cell death induction. Interacts (via death domain) with MADD (via death domain).

It is found in the cell membrane. The protein resides in the golgi apparatus membrane. Receptor for TNFSF2/TNF-alpha and homotrimeric TNFSF1/lymphotoxin-alpha. The adapter molecule FADD recruits caspase-8 to the activated receptor. The resulting death-inducing signaling complex (DISC) performs caspase-8 proteolytic activation which initiates the subsequent cascade of caspases (aspartate-specific cysteine proteases) mediating apoptosis. The sequence is that of Tumor necrosis factor receptor superfamily member 1A (Tnfrsf1a) from Rattus norvegicus (Rat).